Here is a 363-residue protein sequence, read N- to C-terminus: Putative lipoate-protein ligase A (363 aa).

Residues 49-229 form the BPL/LPL catalytic domain; that stretch reads STAKHCLLLY…CFLLHKSHST (181 aa). Residues Arg91, 96–99, and Lys152 each bind ATP; that span reads GTVF. Residue Lys152 participates in (R)-lipoate binding.

This sequence belongs to the LplA family. In terms of assembly, monomer.

The protein resides in the cytoplasm. It catalyses the reaction L-lysyl-[lipoyl-carrier protein] + (R)-lipoate + ATP = N(6)-[(R)-lipoyl]-L-lysyl-[lipoyl-carrier protein] + AMP + diphosphate + H(+). It functions in the pathway protein modification; protein lipoylation via exogenous pathway; protein N(6)-(lipoyl)lysine from lipoate: step 1/2. It participates in protein modification; protein lipoylation via exogenous pathway; protein N(6)-(lipoyl)lysine from lipoate: step 2/2. Its function is as follows. Catalyzes both the ATP-dependent activation of exogenously supplied lipoate to lipoyl-AMP and the transfer of the activated lipoyl onto the lipoyl domains of lipoate-dependent enzymes. The chain is Putative lipoate-protein ligase A (aim22) from Schizosaccharomyces pombe (strain 972 / ATCC 24843) (Fission yeast).